The sequence spans 688 residues: Sialic acid-binding Ig-like lectin 10 (688 aa).

A signal peptide spans 1–17 (MSLLLFLLSFLLDGPQG). Residues 18–543 (QMESYFLQVQ…DKDSATAFSK (526 aa)) are Extracellular-facing. The 113-residue stretch at 26 to 138 (VQRIVKAQEG…SFKEEFRLQV (113 aa)) folds into the Ig-like V-type domain. Disulfide bonds link C37-C172, C42-C102, and C163-C214. R120 contributes to the N-acetylneuraminate binding site. One can recognise an Ig-like C2-type 1 domain in the interval 145 to 228 (PDIFIPEVLE…SRMSTQRTVR (84 aa)). 2 N-linked (GlcNAc...) asparagine glycosylation sites follow: N195 and N246. 2 Ig-like C2-type domains span residues 250-334 (PDLH…LDLS) and 339-436 (PQDL…LSLS). Cystine bridges form between C271/C318 and C375/C420. Residues 544–564 (GAVLGFGITALLALCLIVVIV) traverse the membrane as a helical segment. The Cytoplasmic segment spans residues 565–688 (KTLQKKGTQE…YSDYTEVRVH (124 aa)). The short motif at 588 to 593 (LDYINV) is the ITIM motif 1 element. A disordered region spans residues 602 to 656 (RNWKAEPDAPSRSSPLDTHFPKPKKKQKDPHFTYPGCPDPTSSSQVPVSENNPEE). Residues 641 to 652 (PTSSSQVPVSEN) are compositionally biased toward polar residues. The ITIM motif 2 motif lies at 657-662 (LHYAAL). A Phosphotyrosine modification is found at Y659.

Belongs to the immunoglobulin superfamily. SIGLEC (sialic acid binding Ig-like lectin) family. Interacts with PTPN6/SHP-1 upon phosphorylation. Interacts with NCF1. Interacts with CD24; the probable CD24:SIGLEC10 complex is proposed to inhibit HGMB1-mediated tissue damage immune response. Interacts with HMGB1; the interaction is dependent on CD24. Associates with membrane IgM on the B cell surface. Interacts with RIGI, CBL and PTPN11. In terms of processing, phosphorylation of Tyr-659 is involved in binding to PTPN6. In terms of tissue distribution, expressed in B cells with high levels in pre-B cells and B1a cells of the peritoneal cavity.

Its subcellular location is the cell membrane. Putative adhesion molecule that mediates sialic-acid dependent binding to cells. Preferentially binds to alpha-2,3- or alpha-2,6-linked sialic acid. The sialic acid recognition site may be masked by cis interactions with sialic acids on the same cell surface. In the immune response, seems to act as an inhibitory receptor upon ligand induced tyrosine phosphorylation by recruiting cytoplasmic phosphatase(s) via their SH2 domain(s) that block signal transduction through dephosphorylation of signaling molecules. Involved in negative regulation of B-cell antigen receptor signaling and specifically acts on B1 cells to inhibit Ca(2+) signaling, cellular expansion and antibody secretion. The inhibition of B cell activation is dependent on PTPN6/SHP-1. In association with CD24 may be involved in the selective suppression of the immune response to danger-associated molecular patterns (DAMPs) such as HMGB1, HSP70 and HSP90. In association with CD24 may regulate the immune repsonse of natural killer (NK) cells. Plays a role in the control of autoimmunity. During initiation of adaptive immune responses by CD8-alpha(+) dendritic cells inhibits cross-presentation by impairing the formation of MHC class I-peptide complexes. The function seems to implicate recruitment of PTPN6/SHP-1, which dephosphorylates NCF1 of the NADPH oxidase complex consequently promoting phagosomal acidification. Functionally, (Microbial infection) During infection by RNA viruses inhibits RIG-I signaling in macrophages by promoting its CBL-dependent ubiquitination and degradation via PTPN11/SHP-2. The polypeptide is Sialic acid-binding Ig-like lectin 10 (Siglec10) (Mus musculus (Mouse)).